Consider the following 299-residue polypeptide: Oxygen-dependent coproporphyrinogen-III oxidase (299 aa).

S92 serves as a coordination point for substrate. A divalent metal cation contacts are provided by H96 and H106. The Proton donor role is filled by H106. 108–110 (NVR) contributes to the substrate binding site. A divalent metal cation-binding residues include H145 and H175. Positions 240–275 (YVEFNLVWDRGTLFGLQTGGRTESILMSMPPLVRWE) are important for dimerization. 258 to 260 (GGR) provides a ligand contact to substrate.

The protein belongs to the aerobic coproporphyrinogen-III oxidase family. As to quaternary structure, homodimer. Requires a divalent metal cation as cofactor.

It is found in the cytoplasm. It catalyses the reaction coproporphyrinogen III + O2 + 2 H(+) = protoporphyrinogen IX + 2 CO2 + 2 H2O. It participates in porphyrin-containing compound metabolism; protoporphyrin-IX biosynthesis; protoporphyrinogen-IX from coproporphyrinogen-III (O2 route): step 1/1. Its function is as follows. Involved in the heme biosynthesis. Catalyzes the aerobic oxidative decarboxylation of propionate groups of rings A and B of coproporphyrinogen-III to yield the vinyl groups in protoporphyrinogen-IX. The chain is Oxygen-dependent coproporphyrinogen-III oxidase from Klebsiella pneumoniae (strain 342).